The sequence spans 62 residues: uncharacterized protein (62 aa).

Positions 28-61 (KIESTHPEIAKKLKEAAEKYREVEEILKKAVDMV) form a coiled coil.

This is an uncharacterized protein from Archaeoglobus fulgidus (strain ATCC 49558 / DSM 4304 / JCM 9628 / NBRC 100126 / VC-16).